The chain runs to 608 residues: Protein FAM151A (608 aa).

A helical transmembrane segment spans residues 14 to 34 (WILAGSVTVTLVLAISLILGL). Over residues 586–596 (VSSNRPSSRIG) the composition is skewed to polar residues. A disordered region spans residues 586 to 608 (VSSNRPSSRIGPSSVEGFPGESR).

The protein belongs to the menorin family.

The protein resides in the membrane. The chain is Protein FAM151A (Fam151a) from Mus musculus (Mouse).